A 650-amino-acid polypeptide reads, in one-letter code: 1-deoxy-D-xylulose-5-phosphate synthase 2 (650 aa).

Residues His-79 and 120–122 (AHS) contribute to the thiamine diphosphate site. Residue Asp-151 participates in Mg(2+) binding. Thiamine diphosphate contacts are provided by residues 152–153 (GS), Asn-180, Tyr-289, and Glu-371. Asn-180 lines the Mg(2+) pocket.

The protein belongs to the transketolase family. DXPS subfamily. As to quaternary structure, homodimer. It depends on Mg(2+) as a cofactor. The cofactor is thiamine diphosphate.

The catalysed reaction is D-glyceraldehyde 3-phosphate + pyruvate + H(+) = 1-deoxy-D-xylulose 5-phosphate + CO2. The protein operates within metabolic intermediate biosynthesis; 1-deoxy-D-xylulose 5-phosphate biosynthesis; 1-deoxy-D-xylulose 5-phosphate from D-glyceraldehyde 3-phosphate and pyruvate: step 1/1. Catalyzes the acyloin condensation reaction between C atoms 2 and 3 of pyruvate and glyceraldehyde 3-phosphate to yield 1-deoxy-D-xylulose-5-phosphate (DXP). In Zymomonas mobilis subsp. mobilis (strain ATCC 31821 / ZM4 / CP4), this protein is 1-deoxy-D-xylulose-5-phosphate synthase 2.